The following is a 37-amino-acid chain: Photosystem I reaction center subunit VIII (37 aa).

Residues 9–29 (SILVTLVGLVFPAFAMASLFL) traverse the membrane as a helical segment.

It belongs to the PsaI family.

The protein localises to the plastid. It is found in the chloroplast thylakoid membrane. May help in the organization of the PsaL subunit. This Pelargonium hortorum (Common geranium) protein is Photosystem I reaction center subunit VIII.